Here is a 216-residue protein sequence, read N- to C-terminus: Large ribosomal subunit protein uL1A (216 aa).

Residues serine 85 and serine 128 each carry the phosphoserine modification.

The protein belongs to the universal ribosomal protein uL1 family. In terms of assembly, component of the large ribosomal subunit (LSU). Mature yeast ribosomes consist of a small (40S) and a large (60S) subunit. The 40S small subunit contains 1 molecule of ribosomal RNA (18S rRNA) and at least 33 different proteins. The large 60S subunit contains 3 rRNA molecules (25S, 5.8S and 5S rRNA) and at least 46 different proteins. uL1 forms part of the L1 stalk.

Its subcellular location is the cytoplasm. Component of the ribosome, a large ribonucleoprotein complex responsible for the synthesis of proteins in the cell. The small ribosomal subunit (SSU) binds messenger RNAs (mRNAs) and translates the encoded message by selecting cognate aminoacyl-transfer RNA (tRNA) molecules. The large subunit (LSU) contains the ribosomal catalytic site termed the peptidyl transferase center (PTC), which catalyzes the formation of peptide bonds, thereby polymerizing the amino acids delivered by tRNAs into a polypeptide chain. The nascent polypeptides leave the ribosome through a tunnel in the LSU and interact with protein factors that function in enzymatic processing, targeting, and the membrane insertion of nascent chains at the exit of the ribosomal tunnel. uL1 forms part of the L1 stalk, a mobile element that plays a role in evacuating the exit-site tRNA. This is Large ribosomal subunit protein uL1A (rpl102) from Schizosaccharomyces pombe (strain 972 / ATCC 24843) (Fission yeast).